Consider the following 78-residue polypeptide: Large ribosomal subunit protein bL28 (78 aa).

This sequence belongs to the bacterial ribosomal protein bL28 family.

This chain is Large ribosomal subunit protein bL28, found in Histophilus somni (strain 129Pt) (Haemophilus somnus).